A 365-amino-acid polypeptide reads, in one-letter code: Chorismate synthase (365 aa).

Residues Arg-48 and Arg-54 each coordinate NADP(+). FMN-binding positions include 125-127 (RAS), 237-238 (NA), Gly-277, 292-296 (KPTSS), and Arg-318.

This sequence belongs to the chorismate synthase family. As to quaternary structure, homotetramer. The cofactor is FMNH2.

It carries out the reaction 5-O-(1-carboxyvinyl)-3-phosphoshikimate = chorismate + phosphate. The protein operates within metabolic intermediate biosynthesis; chorismate biosynthesis; chorismate from D-erythrose 4-phosphate and phosphoenolpyruvate: step 7/7. In terms of biological role, catalyzes the anti-1,4-elimination of the C-3 phosphate and the C-6 proR hydrogen from 5-enolpyruvylshikimate-3-phosphate (EPSP) to yield chorismate, which is the branch point compound that serves as the starting substrate for the three terminal pathways of aromatic amino acid biosynthesis. This reaction introduces a second double bond into the aromatic ring system. This chain is Chorismate synthase, found in Polaromonas sp. (strain JS666 / ATCC BAA-500).